The primary structure comprises 513 residues: ATP synthase subunit alpha (513 aa).

169–176 (GDRQCGKT) provides a ligand contact to ATP.

Belongs to the ATPase alpha/beta chains family. As to quaternary structure, F-type ATPases have 2 components, CF(1) - the catalytic core - and CF(0) - the membrane proton channel. CF(1) has five subunits: alpha(3), beta(3), gamma(1), delta(1), epsilon(1). CF(0) has three main subunits: a(1), b(2) and c(9-12). The alpha and beta chains form an alternating ring which encloses part of the gamma chain. CF(1) is attached to CF(0) by a central stalk formed by the gamma and epsilon chains, while a peripheral stalk is formed by the delta and b chains.

It is found in the cell inner membrane. The enzyme catalyses ATP + H2O + 4 H(+)(in) = ADP + phosphate + 5 H(+)(out). Functionally, produces ATP from ADP in the presence of a proton gradient across the membrane. The alpha chain is a regulatory subunit. This chain is ATP synthase subunit alpha, found in Burkholderia vietnamiensis (strain G4 / LMG 22486) (Burkholderia cepacia (strain R1808)).